The following is a 307-amino-acid chain: Elongation factor Ts (307 aa).

Positions 79–82 (TDFV) are involved in Mg(2+) ion dislocation from EF-Tu.

Belongs to the EF-Ts family.

It is found in the cytoplasm. Associates with the EF-Tu.GDP complex and induces the exchange of GDP to GTP. It remains bound to the aminoacyl-tRNA.EF-Tu.GTP complex up to the GTP hydrolysis stage on the ribosome. This is Elongation factor Ts from Sinorhizobium medicae (strain WSM419) (Ensifer medicae).